Here is a 104-residue protein sequence, read N- to C-terminus: V-type ATP synthase subunit F (104 aa).

The protein belongs to the V-ATPase F subunit family.

Its function is as follows. Produces ATP from ADP in the presence of a proton gradient across the membrane. The polypeptide is V-type ATP synthase subunit F (atpF) (Thermus thermophilus (strain ATCC 27634 / DSM 579 / HB8)).